A 130-amino-acid polypeptide reads, in one-letter code: Glycine cleavage system H protein (130 aa).

The Lipoyl-binding domain occupies serine 24 to glutamine 106. Lysine 65 is subject to N6-lipoyllysine.

The protein belongs to the GcvH family. In terms of assembly, the glycine cleavage system is composed of four proteins: P, T, L and H. Requires (R)-lipoate as cofactor.

Its function is as follows. The glycine cleavage system catalyzes the degradation of glycine. The H protein shuttles the methylamine group of glycine from the P protein to the T protein. This chain is Glycine cleavage system H protein, found in Halorhodospira halophila (strain DSM 244 / SL1) (Ectothiorhodospira halophila (strain DSM 244 / SL1)).